A 1201-amino-acid chain; its full sequence is Vitamin B12-dependent ribonucleotide reductase (1201 aa).

Residues Ser153, 198-199, Gly230, 482-486, and 683-687 contribute to the substrate site; these read AC, NPCSE, and PTGTI. Residues Cys199 and Cys495 are joined by a disulfide bond. The Proton acceptor role is filled by Asn482. Residue Cys484 is the Cysteine radical intermediate of the active site. Glu486 acts as the Proton acceptor in catalysis. The segment covering 1100-1118 has biased composition (basic and acidic residues); that stretch reads DEIGSKRATAESNGQEKET. The tract at residues 1100–1120 is disordered; the sequence is DEIGSKRATAESNGQEKETLS.

The protein belongs to the ribonucleoside diphosphate reductase class-2 family. It depends on adenosylcob(III)alamin as a cofactor.

It catalyses the reaction a 2'-deoxyribonucleoside 5'-diphosphate + [thioredoxin]-disulfide + H2O = a ribonucleoside 5'-diphosphate + [thioredoxin]-dithiol. In terms of biological role, catalyzes the reduction of ribonucleotides to deoxyribonucleotides. May function to provide a pool of deoxyribonucleotide precursors for DNA repair during oxygen limitation and/or for immediate growth after restoration of oxygen. This is Vitamin B12-dependent ribonucleotide reductase (nrdJ) from Leptospira interrogans serogroup Icterohaemorrhagiae serovar Lai (strain 56601).